A 504-amino-acid polypeptide reads, in one-letter code: Alpha-L-arabinofuranosidase C (504 aa).

Asn-81, Asn-152, Asn-269, and Asn-329 each carry an N-linked (GlcNAc...) asparagine glycan.

It belongs to the glycosyl hydrolase 51 family.

The protein localises to the secreted. The catalysed reaction is Hydrolysis of terminal non-reducing alpha-L-arabinofuranoside residues in alpha-L-arabinosides.. Its pathway is glycan metabolism; L-arabinan degradation. Alpha-L-arabinofuranosidase involved in the degradation of arabinoxylan, a major component of plant hemicellulose. Acts only on small linear 1,5-alpha-linked L-arabinofuranosyl oligosaccharides. The sequence is that of Alpha-L-arabinofuranosidase C (abfC) from Emericella nidulans (strain FGSC A4 / ATCC 38163 / CBS 112.46 / NRRL 194 / M139) (Aspergillus nidulans).